A 348-amino-acid chain; its full sequence is Dihydroorotase (348 aa).

Zn(2+) contacts are provided by H14 and H16. Substrate contacts are provided by residues 16–18 and N42; that span reads HLR. Zn(2+)-binding residues include K100, H137, and H175. K100 is subject to N6-carboxylysine. H137 serves as a coordination point for substrate. L220 provides a ligand contact to substrate. Residue D248 participates in Zn(2+) binding. D248 is a catalytic residue. H252 and A264 together coordinate substrate.

Belongs to the metallo-dependent hydrolases superfamily. DHOase family. Class II DHOase subfamily. In terms of assembly, homodimer. Zn(2+) serves as cofactor.

It catalyses the reaction (S)-dihydroorotate + H2O = N-carbamoyl-L-aspartate + H(+). It functions in the pathway pyrimidine metabolism; UMP biosynthesis via de novo pathway; (S)-dihydroorotate from bicarbonate: step 3/3. Its function is as follows. Catalyzes the reversible cyclization of carbamoyl aspartate to dihydroorotate. This chain is Dihydroorotase, found in Pseudomonas putida (strain GB-1).